The primary structure comprises 2326 residues: Telomere-associated protein RIF1 (2326 aa).

Disordered regions lie at residues 381–410 (QGTP…SPAT), 1105–1965 (YTQS…CITP), and 1993–2050 (VENK…DDSL). Residues 382–396 (GTPSRVPSNPNSANP) are compositionally biased toward polar residues. Basic and acidic residues-rich tracts occupy residues 1112–1126 (SLEK…EDFK) and 1150–1182 (CKVD…RGDR). The span at 1216–1225 (SAISCSSTSS) shows a compositional bias: low complexity. 2 stretches are compositionally biased toward polar residues: residues 1233-1242 (QPASRRQSFI) and 1252-1270 (SRPF…SQSA). The span at 1290-1299 (KSGEESRKSS) shows a compositional bias: basic and acidic residues. Polar residues-rich tracts occupy residues 1318–1332 (MEQQ…VTNS) and 1341–1353 (SFVS…SPES). Basic and acidic residues predominate over residues 1376–1402 (PDIKKAEAVMAEIEKVRAFEMDSKENT). A compositionally biased stretch (polar residues) spans 1403–1412 (PPKTAVSSEQ). 3 stretches are compositionally biased toward basic and acidic residues: residues 1448-1480 (QDKE…DASQ), 1489-1511 (ASEH…DLGS), and 1519-1539 (GADE…KSDS). A compositionally biased stretch (polar residues) spans 1564-1573 (SSQGLLSSIE). Over residues 1586 to 1595 (SLKKKSGKTK) the composition is skewed to basic residues. Over residues 1596–1609 (NKSDSLEGKRKDVQ) the composition is skewed to basic and acidic residues. Polar residues-rich tracts occupy residues 1610 to 1640 (PESQ…SEVS) and 1671 to 1683 (RTSP…SVEQ). Over residues 1697–1712 (RVSDEVLKGDENKCIE) the composition is skewed to basic and acidic residues. Residues 1713-1745 (KQSSVEQHSSVQPENVQGANTSGSDLSSLQMQD) are compositionally biased toward polar residues. The span at 1776–1785 (SKSEDPRELI) shows a compositional bias: basic and acidic residues. Positions 1795–1813 (AVSTAEVSGSSNLEESLSI) are enriched in polar residues. Composition is skewed to basic and acidic residues over residues 1869–1884 (VEIK…DRAE), 1908–1925 (SEEK…HGEM), and 1932–1954 (DGSK…KEEA). A compositionally biased stretch (polar residues) spans 2009-2036 (SFTSVNGSPSGVQARCTWSPSASPSTSI).

This sequence belongs to the RIF1 family. Interacts with TP53BP1 (when phosphorylated by ATM).

The protein localises to the nucleus. It is found in the chromosome. It localises to the telomere. Its subcellular location is the cytoplasm. The protein resides in the cytoskeleton. The protein localises to the spindle. Key regulator of TP53BP1 that plays a key role in the repair of double-strand DNA breaks (DSBs) in response to DNA damage: acts by promoting non-homologous end joining (NHEJ)-mediated repair of DSBs. In response to DNA damage, interacts with ATM-phosphorylated TP53BP1, allowing recruitment to DNA DSBs. Once recruited to DSBs, RIF1 and TP53BP1 act by promoting NHEJ-mediated repair of DSBs. In the same time, RIF1 and TP53BP1 specifically counteract DSBs resection via homologous recombination (HR) during G1 phase. The polypeptide is Telomere-associated protein RIF1 (Gallus gallus (Chicken)).